The chain runs to 169 residues: Small ribosomal subunit protein uS5 (169 aa).

The S5 DRBM domain maps to 14-77 (LQEKVVEVRR…EDAKKNLIVV (64 aa)).

It belongs to the universal ribosomal protein uS5 family. Part of the 30S ribosomal subunit. Contacts proteins S4 and S8.

In terms of biological role, with S4 and S12 plays an important role in translational accuracy. Located at the back of the 30S subunit body where it stabilizes the conformation of the head with respect to the body. The protein is Small ribosomal subunit protein uS5 of Clostridioides difficile (strain 630) (Peptoclostridium difficile).